The chain runs to 298 residues: Diphthine methyl ester synthase (298 aa).

Residues L9, D85, G88, 113 to 114 (SV), L164, L222, and H247 contribute to the S-adenosyl-L-methionine site.

It belongs to the diphthine synthase family.

The protein resides in the cytoplasm. It catalyses the reaction 2-[(3S)-amino-3-carboxypropyl]-L-histidyl-[translation elongation factor 2] + 4 S-adenosyl-L-methionine = diphthine methyl ester-[translation elongation factor 2] + 4 S-adenosyl-L-homocysteine + 3 H(+). It functions in the pathway protein modification; peptidyl-diphthamide biosynthesis. S-adenosyl-L-methionine-dependent methyltransferase that catalyzes four methylations of the modified target histidine residue in translation elongation factor 2 (EF-2), to form an intermediate called diphthine methyl ester. The four successive methylation reactions represent the second step of diphthamide biosynthesis. The sequence is that of Diphthine methyl ester synthase (DPH5) from Candida glabrata (strain ATCC 2001 / BCRC 20586 / JCM 3761 / NBRC 0622 / NRRL Y-65 / CBS 138) (Yeast).